The sequence spans 89 residues: Small ribosomal subunit protein uS15 (89 aa).

It belongs to the universal ribosomal protein uS15 family. Part of the 30S ribosomal subunit. Forms a bridge to the 50S subunit in the 70S ribosome, contacting the 23S rRNA.

In terms of biological role, one of the primary rRNA binding proteins, it binds directly to 16S rRNA where it helps nucleate assembly of the platform of the 30S subunit by binding and bridging several RNA helices of the 16S rRNA. Forms an intersubunit bridge (bridge B4) with the 23S rRNA of the 50S subunit in the ribosome. This Thermomicrobium roseum (strain ATCC 27502 / DSM 5159 / P-2) protein is Small ribosomal subunit protein uS15.